The following is a 304-amino-acid chain: Tetrahydromethanopterin S-methyltransferase subunit E (304 aa).

6 helical membrane-spanning segments follow: residues 3-23 (PLIGMGVLALIGVAATIAGAS), 86-106 (PLFALVLGALIAACVHGTFAV), 131-151 (HTPVIMGYSFITTFCILVVSY), 152-172 (LMTVVLGHPFPLTMLAFIWGI), 233-253 (PVTGMAFGMTVFLGSWVTTVF), and 263-283 (WISVVAGVIIVLILIFWNWKI).

This sequence belongs to the MtrE family. As to quaternary structure, the complex is composed of 8 subunits; MtrA, MtrB, MtrC, MtrD, MtrE, MtrF, MtrG and MtrH.

It is found in the cell membrane. It carries out the reaction 5-methyl-5,6,7,8-tetrahydromethanopterin + coenzyme M + 2 Na(+)(in) = 5,6,7,8-tetrahydromethanopterin + methyl-coenzyme M + 2 Na(+)(out). It participates in one-carbon metabolism; methanogenesis from CO(2); methyl-coenzyme M from 5,10-methylene-5,6,7,8-tetrahydromethanopterin: step 2/2. In terms of biological role, part of a complex that catalyzes the formation of methyl-coenzyme M and tetrahydromethanopterin from coenzyme M and methyl-tetrahydromethanopterin. This is an energy-conserving, sodium-ion translocating step. The sequence is that of Tetrahydromethanopterin S-methyltransferase subunit E from Methanosarcina acetivorans (strain ATCC 35395 / DSM 2834 / JCM 12185 / C2A).